The following is a 397-amino-acid chain: S-layer protein B (397 aa).

Positions 1-24 (MVVKKTFVLSTLILISVVALVSTA) are cleaved as a signal peptide. A coiled-coil region spans residues 259 to 314 (INALNNEVSTLRSEISSLNSTIASLNKSLANANTQISNLQSEITTLNSEIGKLNST). A helical transmembrane segment spans residues 373-393 (GGIIAGIIGLIVAIVAIVLVM).

The protein belongs to the Sulfolobales SlaB family. The mushroom-shaped unit cells of the Sulfolobales' S-layers may consist of three SlaB subunits and six SlaA subunits.

It localises to the secreted. The protein resides in the cell wall. It is found in the S-layer. Its subcellular location is the cell membrane. Functionally, S-layer small protein. May anchor the complex to the cell membrane. This is S-layer protein B from Saccharolobus solfataricus (strain ATCC 35092 / DSM 1617 / JCM 11322 / P2) (Sulfolobus solfataricus).